Consider the following 249-residue polypeptide: Uridylate kinase (249 aa).

22–25 is a binding site for ATP; sequence KISG. Residues 30–35 form an involved in allosteric activation by GTP region; it reads GTQGFG. Gly-64 serves as a coordination point for UMP. Gly-65 and Arg-69 together coordinate ATP. UMP is bound by residues Asp-84 and 145–152; that span reads TGNPYFTT. ATP contacts are provided by Asn-173, Tyr-179, and Asp-182.

The protein belongs to the UMP kinase family. Homohexamer.

The protein resides in the cytoplasm. It carries out the reaction UMP + ATP = UDP + ADP. Its pathway is pyrimidine metabolism; CTP biosynthesis via de novo pathway; UDP from UMP (UMPK route): step 1/1. Its activity is regulated as follows. Allosterically activated by GTP. Inhibited by UTP. Catalyzes the reversible phosphorylation of UMP to UDP. The protein is Uridylate kinase of Ruegeria sp. (strain TM1040) (Silicibacter sp.).